A 271-amino-acid polypeptide reads, in one-letter code: Eukaryotic translation initiation factor 2 subunit beta (271 aa).

The C4-type zinc finger occupies 223 to 247 (CLGCQSPDTILSKENRLFFLRCEKC).

This sequence belongs to the eIF-2-beta/eIF-5 family. As to quaternary structure, eukaryotic translation initiation factor 2 eIF2 is a heterotrimeric complex composed of an alpha, a beta and a gamma subunit.

It localises to the cytoplasm. The protein resides in the cytosol. Functionally, component of the eIF2 complex that functions in the early steps of protein synthesis by forming a ternary complex with GTP and initiator tRNA. This complex binds to a 40S ribosomal subunit, followed by mRNA binding to form a 43S pre-initiation complex (43S PIC). Junction of the 60S ribosomal subunit to form the 80S initiation complex is preceded by hydrolysis of the GTP bound to eIF2 and release of an eIF2-GDP binary complex. In order for eIF2 to recycle and catalyze another round of initiation, the GDP bound to eIF2 must exchange with GTP by way of a reaction catalyzed by eIF2B. The sequence is that of Eukaryotic translation initiation factor 2 subunit beta from Malus domestica (Apple).